A 336-amino-acid chain; its full sequence is Inositol 2-dehydrogenase (336 aa).

It belongs to the Gfo/Idh/MocA family. As to quaternary structure, homotetramer.

It carries out the reaction myo-inositol + NAD(+) = scyllo-inosose + NADH + H(+). Its function is as follows. Involved in the oxidation of myo-inositol (MI) to 2-keto-myo-inositol (2KMI or 2-inosose). The chain is Inositol 2-dehydrogenase from Acidiphilium cryptum (strain JF-5).